The chain runs to 366 residues: 3-dehydroquinate synthase (366 aa).

Residues 107 to 111 (GVIGD), 131 to 132 (TS), K144, and K153 contribute to the NAD(+) site. The Zn(2+) site is built by E186, H251, and H268.

The protein belongs to the sugar phosphate cyclases superfamily. Dehydroquinate synthase family. The cofactor is Co(2+). Zn(2+) serves as cofactor. NAD(+) is required as a cofactor.

The protein localises to the cytoplasm. The catalysed reaction is 7-phospho-2-dehydro-3-deoxy-D-arabino-heptonate = 3-dehydroquinate + phosphate. The protein operates within metabolic intermediate biosynthesis; chorismate biosynthesis; chorismate from D-erythrose 4-phosphate and phosphoenolpyruvate: step 2/7. In terms of biological role, catalyzes the conversion of 3-deoxy-D-arabino-heptulosonate 7-phosphate (DAHP) to dehydroquinate (DHQ). The polypeptide is 3-dehydroquinate synthase (Rippkaea orientalis (strain PCC 8801 / RF-1) (Cyanothece sp. (strain PCC 8801))).